Reading from the N-terminus, the 264-residue chain is Apolipoprotein A-I (264 aa).

A signal peptide spans 1-18 (MKTVVLAVAVLFLTGSQA). 2 consecutive repeat copies span residues 67 to 88 (LNLL…EQLG) and 89 to 110 (PVTQ…REMN). Residues 67–264 (LNLLENWDTL…EEASKKLNAQ (198 aa)) are 10 X approximate tandem repeats. Residue Met-109 is modified to Methionine sulfoxide. One copy of the 3; half-length repeat lies at 111–121 (KDLEEVKAKVQ). 5 repeat units span residues 122-143 (PYLD…QKME), 144-165 (PLGA…EKLT), 166-187 (PLGE…TKMT), 188-207 (PYSD…LKDS), and 208-229 (PTLA…EKAK). At Met-193 the chain carries Methionine sulfoxide. One copy of the 9; half-length repeat lies at 230–240 (PALEDLRQGLM). A Methionine sulfoxide modification is found at Met-240. Repeat unit 10 spans residues 241-264 (PVFESFKTRIMSMVEEASKKLNAQ).

Belongs to the apolipoprotein A1/A4/E family. In terms of assembly, homodimer. Interacts with APOA1BP and CLU. Component of a sperm activating protein complex (SPAP), consisting of APOA1, an immunoglobulin heavy chain, an immunoglobulin light chain and albumin. Interacts with NDRG1. Interacts with SCGB3A2. Interacts with NAXE and YJEFN3. Post-translationally, glycosylated. In terms of processing, palmitoylated. Phosphorylation sites are present in the extracellular medium. Major protein of plasma HDL, also found in chylomicrons.

It is found in the secreted. Functionally, participates in the reverse transport of cholesterol from tissues to the liver for excretion by promoting cholesterol efflux from tissues and by acting as a cofactor for the lecithin cholesterol acyltransferase (LCAT). As part of the SPAP complex, activates spermatozoa motility. This is Apolipoprotein A-I (APOAI) from Mesocricetus auratus (Golden hamster).